We begin with the raw amino-acid sequence, 729 residues long: Methionine--tRNA ligase (729 aa).

The 'HIGH' region motif lies at 12–22; the sequence is PYVNNIPHLGN. Zn(2+)-binding residues include Cys-143, Cys-146, Cys-155, and Cys-158. The 'KMSKS' region motif lies at 330-334; sequence KFSKS. Lys-333 contributes to the ATP binding site. A tRNA-binding domain is found at 565-670; it reads FSEQVCLKVV…DNPIPGERII (106 aa).

This sequence belongs to the class-I aminoacyl-tRNA synthetase family. MetG type 1 subfamily. As to quaternary structure, homodimer. Zn(2+) serves as cofactor.

Its subcellular location is the cytoplasm. The enzyme catalyses tRNA(Met) + L-methionine + ATP = L-methionyl-tRNA(Met) + AMP + diphosphate. Its function is as follows. Is required not only for elongation of protein synthesis but also for the initiation of all mRNA translation through initiator tRNA(fMet) aminoacylation. This Borrelia hermsii (strain HS1 / DAH) protein is Methionine--tRNA ligase.